A 371-amino-acid chain; its full sequence is 3-isopropylmalate dehydrogenase (371 aa).

77–90 (GPKWDDNPPHLRPE) lines the NAD(+) pocket. Substrate contacts are provided by arginine 97, arginine 107, arginine 135, and aspartate 224. Residues aspartate 224, aspartate 248, and aspartate 252 each coordinate Mg(2+). NAD(+) is bound at residue 282–294 (GSAPDIAGMNKAN).

This sequence belongs to the isocitrate and isopropylmalate dehydrogenases family. LeuB type 1 subfamily. As to quaternary structure, homodimer. The cofactor is Mg(2+). Requires Mn(2+) as cofactor.

It localises to the cytoplasm. The catalysed reaction is (2R,3S)-3-isopropylmalate + NAD(+) = 4-methyl-2-oxopentanoate + CO2 + NADH. Its pathway is amino-acid biosynthesis; L-leucine biosynthesis; L-leucine from 3-methyl-2-oxobutanoate: step 3/4. Its function is as follows. Catalyzes the oxidation of 3-carboxy-2-hydroxy-4-methylpentanoate (3-isopropylmalate) to 3-carboxy-4-methyl-2-oxopentanoate. The product decarboxylates to 4-methyl-2 oxopentanoate. The polypeptide is 3-isopropylmalate dehydrogenase (Geobacillus kaustophilus (strain HTA426)).